The following is a 159-amino-acid chain: Transcription elongation factor A protein-like 1 (159 aa).

Residues 1–121 (MDKPRKENEE…QFKGDIHGRN (121 aa)) form a disordered region. The span at 17 to 34 (KTDEERPPVEHSPEKQSP) shows a compositional bias: basic and acidic residues. A compositionally biased stretch (acidic residues) spans 37–54 (QSSEEQSSEEEFFPEELL). Basic and acidic residues-rich tracts occupy residues 64–80 (SEERPPQEGLSRKDLFE) and 95–119 (HKLEEGSFKERLARSRPQFKGDIHG).

Belongs to the TFS-II family. TFA subfamily.

The protein localises to the nucleus. May be involved in transcriptional regulation. Modulates various viral and cellular promoters in a promoter context-dependent manner. Does not bind DNA directly. The chain is Transcription elongation factor A protein-like 1 from Gorilla gorilla gorilla (Western lowland gorilla).